A 348-amino-acid polypeptide reads, in one-letter code: MKKTAIAIAVALAGFATVAQAAPKDNTWYTGAKLGWSQYHDTGFIPNNGPTHENQLGAGAFGGYQVNPYVGFEMGYDWLGRMPYKGDNINGAYKAQGVQLTAKLGYPITDDLDIYTRLGGMVWRADTKANVPGGASFKDHDTGVSPVFAGGVEYAITPEIATRLEYQWTNNIGDANTIGTRPDNGLLSLGVSYRFGQGEAAPVVAPAPAPEVQTKHFTLKSDVLFNFNKATLKPEGQAALDQLYSQLSNLDPKDGSVVVLGYTDRIGSDAYNQGLSERRAQSVVDYLISKGIPADKISARGMGESNPVTGNTCDNVKQRAALIDCLAPDRRVEIEVKGIKDVVTQPQA.

An N-terminal signal peptide occupies residues Met1–Ala21. The next 8 beta stranded transmembrane spans lie at Thr27–Ser37, Gln55–Val66, Val70–Trp78, Gln96–Pro107, Leu112–Gly120, Pro146–Ala155, Ile160–Gln167, and Leu186–Arg194. The tract at residues Ala201–Pro210 is hinge-like. 3 repeat units span residues Ala205–Pro206, Ala207–Pro208, and Ala209–Pro210. The interval Ala205 to Pro210 is 3 X 2 AA tandem repeats of A-P. In terms of domain architecture, OmpA-like spans Val212 to Lys340. Cysteines 313 and 325 form a disulfide.

This sequence belongs to the outer membrane OOP (TC 1.B.6) superfamily. OmpA family. Monomer and homodimer. In terms of assembly, (Microbial infection) Upon infection with phage Sf6 associates with the mature bacteriophage capsid. Was originally suggested to be within the bacteriophage capsid. This has been disproven.

The protein resides in the extracellular vesicle. Its subcellular location is the cell outer membrane. Functionally, with TolR probably plays a role in maintaining the position of the peptidoglycan cell wall in the periplasm. Acts as a porin with low permeability that allows slow penetration of small solutes; an internal gate slows down solute passage. Its function is as follows. Required for conjugation with F-type plasmids; probably serves as the mating receptor on recipient cells. In terms of biological role, (Microbial infection) Serves as a secondary receptor during phage Sf6 infection; infection requires both lipopolysaccharide (LPS) and the OmpA beta-barrel. This chain is Outer membrane protein A, found in Shigella flexneri.